Consider the following 206-residue polypeptide: 3-demethoxyubiquinol 3-hydroxylase (206 aa).

Residues glutamate 55, glutamate 85, histidine 88, glutamate 137, glutamate 169, and histidine 172 each contribute to the Fe cation site.

The protein belongs to the COQ7 family. Fe cation is required as a cofactor.

The protein localises to the cell membrane. It catalyses the reaction a 5-methoxy-2-methyl-3-(all-trans-polyprenyl)benzene-1,4-diol + AH2 + O2 = a 3-demethylubiquinol + A + H2O. It functions in the pathway cofactor biosynthesis; ubiquinone biosynthesis. Functionally, catalyzes the hydroxylation of 2-nonaprenyl-3-methyl-6-methoxy-1,4-benzoquinol during ubiquinone biosynthesis. In Azoarcus sp. (strain BH72), this protein is 3-demethoxyubiquinol 3-hydroxylase.